Reading from the N-terminus, the 507-residue chain is 2,3-bisphosphoglycerate-independent phosphoglycerate mutase (507 aa).

Mn(2+) is bound by residues Asp-11 and Ser-61. Residue Ser-61 is the Phosphoserine intermediate of the active site. Residues His-122, 152–153 (RD), Arg-183, Arg-189, 258–261 (RNDR), and Lys-332 each bind substrate. 5 residues coordinate Mn(2+): Asp-399, His-403, Asp-440, His-441, and His-458.

This sequence belongs to the BPG-independent phosphoglycerate mutase family. Monomer. Requires Mn(2+) as cofactor.

The enzyme catalyses (2R)-2-phosphoglycerate = (2R)-3-phosphoglycerate. It participates in carbohydrate degradation; glycolysis; pyruvate from D-glyceraldehyde 3-phosphate: step 3/5. Functionally, catalyzes the interconversion of 2-phosphoglycerate and 3-phosphoglycerate. This is 2,3-bisphosphoglycerate-independent phosphoglycerate mutase from Parabacteroides distasonis (strain ATCC 8503 / DSM 20701 / CIP 104284 / JCM 5825 / NCTC 11152).